The following is a 233-amino-acid chain: Large ribosomal subunit protein uL1 (233 aa).

It belongs to the universal ribosomal protein uL1 family. In terms of assembly, part of the 50S ribosomal subunit.

In terms of biological role, binds directly to 23S rRNA. The L1 stalk is quite mobile in the ribosome, and is involved in E site tRNA release. Its function is as follows. Protein L1 is also a translational repressor protein, it controls the translation of the L11 operon by binding to its mRNA. This chain is Large ribosomal subunit protein uL1, found in Shewanella baltica (strain OS185).